Reading from the N-terminus, the 459-residue chain is UDP-N-acetylmuramoylalanine--D-glutamate ligase (459 aa).

Residue 119–125 participates in ATP binding; sequence GTNGKTT.

It belongs to the MurCDEF family.

The protein resides in the cytoplasm. The catalysed reaction is UDP-N-acetyl-alpha-D-muramoyl-L-alanine + D-glutamate + ATP = UDP-N-acetyl-alpha-D-muramoyl-L-alanyl-D-glutamate + ADP + phosphate + H(+). It functions in the pathway cell wall biogenesis; peptidoglycan biosynthesis. In terms of biological role, cell wall formation. Catalyzes the addition of glutamate to the nucleotide precursor UDP-N-acetylmuramoyl-L-alanine (UMA). The protein is UDP-N-acetylmuramoylalanine--D-glutamate ligase of Lacticaseibacillus paracasei (strain ATCC 334 / BCRC 17002 / CCUG 31169 / CIP 107868 / KCTC 3260 / NRRL B-441) (Lactobacillus paracasei).